The sequence spans 483 residues: Cyclic AMP-dependent transcription factor ATF-7 (483 aa).

The segment at 1–285 (MGDDRPFVCN…GMVVGSASTM (285 aa)) is transactivation domain. The C2H2-type zinc finger occupies 7–31 (FVCNAPGCGQRFTNEDHLAVHKHKH). Thr51 bears the Phosphothreonine; by MAPK11 mark. Thr53 and Thr101 each carry phosphothreonine. Lys107 is covalently cross-linked (Glycyl lysine isopeptide (Lys-Gly) (interchain with G-Cter in SUMO1)). Disordered stretches follow at residues 110–148 (EPVEVDSSPPDSPASSPCSPPLKEKEVTPKPVLISTPTP) and 299–345 (HPDA…NRAA). Composition is skewed to low complexity over residues 114-126 (VDSSPPDSPASSP) and 307-320 (QPQVSPAQPTPSTG). Residues 326–343 (TVDEDPDERRQRFLERNR) are compositionally biased toward basic and acidic residues. The region spanning 332–395 (DERRQRFLER…AQLKQLLLAH (64 aa)) is the bZIP domain. Residues 334–354 (RRQRFLERNRAAASRCRQKRK) form a basic motif region. The leucine-zipper stretch occupies residues 360–388 (LEKKAEELTSQNIQLSNEVTLLRNEVAQL). 2 disordered regions span residues 407–440 (TQGYLESPKESSEPTGSPAPVIQHSSATAPSNGL) and 464–483 (LSMPIQSHVIMTPQSQSAGR). Phosphoserine occurs at positions 413 and 423. Polar residues predominate over residues 429-440 (QHSSATAPSNGL).

The protein belongs to the bZIP family. In terms of assembly, homodimer; binds DNA as homodimer. Heterodimer; heterodimerizes with other members of ATF family and with JUN family members. Interacts with JNK2; the interaction does not phosphorylate ATF7 but acts as a docking site for other ATF-associated partners such as JUN family members. Interacts (via its transactivation domain) with TAF12 (isoforms TAFII15 and TAFII20); the interaction potentiates the transactivation activity (isoform TAFII20 only) and is inhibited by ATF7 sumoylation. Interacts with TAF4; the interaction inhibits the TAF12-dependent transactivation. Interacts with MAPK9; the interaction does not phosphorylate ATF7 but acts as a docking site for ATF7-associated partners such as JUN. Interacts with Ku complex components XRCC6 and XRCC7. Interacts with TERT. Post-translationally, on EGF stimulation, phosphorylated first on Thr-53 allowing subsequent phosphorylation on Thr-51. This latter phosphorylation prevents sumoylation, increases binding to TAF12 and enhances transcriptional activity. Social isolation stress as well as TNF-alpha also induce the phosphorylation of ATF7. Phosphorylated in proliferating colonic and small intestinal epithelial cells. Sumoylation delays nuclear localization and inhibits transactivation activity through preventing binding to TAF12. RANBP2 appears to be the specific E3 ligase.

It localises to the nucleus. Its subcellular location is the nucleoplasm. The protein resides in the chromosome. The protein localises to the telomere. In terms of biological role, stress-responsive chromatin regulator that plays a role in various biological processes including innate immunological memory, adipocyte differentiation or telomerase regulation. In absence of stress, contributes to the formation of heterochromatin and heterochromatin-like structure by recruiting histone H3K9 tri- and di-methyltransferases thus silencing the transcription of target genes such as STAT1 in adipocytes, or genes involved in innate immunity in macrophages and adipocytes. Stress induces ATF7 phosphorylation that disrupts interactions with histone methyltransferase and enhances the association with coactivators containing histone acetyltransferase and/or histone demethylase, leading to disruption of the heterochromatin-like structure and subsequently transcriptional activation. In response to TNF-alpha, which is induced by various stresses, phosphorylated ATF7 and telomerase are released from telomeres leading to telomere shortening. Plays also a role in maintaining epithelial regenerative capacity and protecting against cell death during intestinal epithelial damage and repair. The protein is Cyclic AMP-dependent transcription factor ATF-7 (ATF7) of Pongo abelii (Sumatran orangutan).